Consider the following 542-residue polypeptide: Probable quinate permease (542 aa).

At 1–22 (MSILALVEDRPTPKEVYNWKIY) the chain is on the cytoplasmic side. A helical membrane pass occupies residues 23–43 (LLAAVASFTSCMIGYDSAFIG). Residues 44–74 (TTLALSSFREEFGFSTMSKTAVNLVSANIVS) lie on the Extracellular side of the membrane. The chain crosses the membrane as a helical span at residues 75 to 95 (CYQAGAFFGAFFAYPIGHFWG). The Cytoplasmic segment spans residues 96–97 (RK). The helical transmembrane segment at 98-118 (WGLLFAGTIFTLGAGLMLGAN) threads the bilayer. The Extracellular segment spans residues 119-130 (GDRGLGLLYGGR). The chain crosses the membrane as a helical span at residues 131–151 (VLAGLGVGAGSNITPIYISEM). Over 152 to 159 (APPSIRGR) the chain is Cytoplasmic. The helical transmembrane segment at 160-180 (LVGVYELGWQIGGLVGFWINY) threads the bilayer. Topologically, residues 181–193 (GVSETLAPSHKQW) are extracellular. Residues 194–214 (IIPFAVQLIPSGLLLIGAVFL) traverse the membrane as a helical segment. Over 215–285 (KESPRWLFSR…AGTNKKVMYR (71 aa)) the chain is Cytoplasmic. A helical transmembrane segment spans residues 286-306 (LFLGSMLFFWQNGSGINAINY). Over 307–325 (YSPTVFKSIGLHGANTSMF) the chain is Extracellular. Residues 326–346 (STGIFGVVKTVVTFVWLLYLI) form a helical membrane-spanning segment. Over 347–352 (DRVGRR) the chain is Cytoplasmic. Residues 353–373 (LLLLIGAAGAAVCLLIVGAYI) traverse the membrane as a helical segment. Residues 374–387 (KIADPASNPTQEMT) lie on the Extracellular side of the membrane. Residues 388–408 (GGGIAAMFFFYLYTVFYTPSW) form a helical membrane-spanning segment. Topologically, residues 409–456 (NGTPWVMNSEMFEPNMRSLAQACAAASNWLWNFLISRFTPQMFAKMEY) are cytoplasmic. A helical membrane pass occupies residues 457 to 477 (GVWFFFASLMLLSIVFVFFLV). At 478-542 (PETKGIPLES…EHVSEDLPKV (65 aa)) the chain is on the extracellular side. Residues 523–542 (GYSKTGEQQVEHVSEDLPKV) are disordered. Positions 531–542 (QVEHVSEDLPKV) are enriched in basic and acidic residues.

This sequence belongs to the major facilitator superfamily. Sugar transporter (TC 2.A.1.1) family. In terms of assembly, interacts with creB. Ubiquitinated. Deubiquitinated by creB, probably to control its activity or amount.

The protein resides in the cell membrane. Integral membrane transporter that imports quinic acid to be catabolized as a carbon source. This is Probable quinate permease (qutD) from Aspergillus fumigatus (strain ATCC MYA-4609 / CBS 101355 / FGSC A1100 / Af293) (Neosartorya fumigata).